Reading from the N-terminus, the 204-residue chain is Oxidoreductase iacF (204 aa).

This sequence belongs to the oxidoreductase OpS7 family.

It participates in secondary metabolite biosynthesis. Its function is as follows. Oxidoreductase; part of the gene cluster that mediates the biosynthesis of iso-A82775C, a enylepoxycyclohexane and biosynthetic precursor of the chloropestolide anticancer natural products. Within the cluster, the prenyltransferase iacE prenylates siccayne to generate pestalodiol E, using dimethylallyl diphosphate (DMAPP) as cosubstrate. The probable oxidoreductase iacF is then involved in the epoxidation of pestalodiol F to pestalodiol F, which is further converted to pestalofone A by the short-chain dehydrogenase/reductase iacG. Iso-A82775C is subsequently generated from pestalofone A by the short-chain dehydrogenase/reductase iacC. Iso-A82775C is further condensed with maldoxin via a Diels-Alder reaction to produce the anticancer natural products chloropestolides A to E. The sequence is that of Oxidoreductase iacF from Pestalotiopsis fici (strain W106-1 / CGMCC3.15140).